The following is a 161-amino-acid chain: Nucleotide-binding protein Tbd_1846 (161 aa).

This sequence belongs to the YajQ family.

Nucleotide-binding protein. The sequence is that of Nucleotide-binding protein Tbd_1846 from Thiobacillus denitrificans (strain ATCC 25259 / T1).